Reading from the N-terminus, the 448-residue chain is Tubulin alpha-4A chain (448 aa).

The MREC motif signature appears at methionine 1–cysteine 4. Glutamine 11 lines the GTP pocket. Lysine 40 is modified (N6-acetyllysine). A Phosphoserine modification is found at serine 48. A GTP-binding site is contributed by glutamate 71. Mg(2+) is bound at residue glutamate 71. Tyrosine 83 is subject to 3'-nitrotyrosine. Positions 140, 144, 145, 179, 206, and 228 each coordinate GTP. Glutamate 254 is an active-site residue. Position 432 is a phosphotyrosine (tyrosine 432). Serine 439 carries the phosphoserine modification.

Belongs to the tubulin family. In terms of assembly, dimer of alpha and beta chains. A typical microtubule is a hollow water-filled tube with an outer diameter of 25 nm and an inner diameter of 15 nM. Alpha-beta heterodimers associate head-to-tail to form protofilaments running lengthwise along the microtubule wall with the beta-tubulin subunit facing the microtubule plus end conferring a structural polarity. Microtubules usually have 13 protofilaments but different protofilament numbers can be found in some organisms and specialized cells. Interacts with CFAP157. Mg(2+) serves as cofactor. In terms of processing, some glutamate residues at the C-terminus are polyglycylated, resulting in polyglycine chains on the gamma-carboxyl group. Glycylation is mainly limited to tubulin incorporated into axonemes (cilia and flagella) whereas glutamylation is prevalent in neuronal cells, centrioles, axonemes, and the mitotic spindle. Both modifications can coexist on the same protein on adjacent residues, and lowering polyglycylation levels increases polyglutamylation, and reciprocally. Cilia and flagella glycylation is required for their stability and maintenance. Flagella glycylation controls sperm motility. Post-translationally, some glutamate residues at the C-terminus are polyglutamylated, resulting in polyglutamate chains on the gamma-carboxyl group. Polyglutamylation plays a key role in microtubule severing by spastin (SPAST). SPAST preferentially recognizes and acts on microtubules decorated with short polyglutamate tails: severing activity by SPAST increases as the number of glutamates per tubulin rises from one to eight, but decreases beyond this glutamylation threshold. Glutamylation is also involved in cilia motility. Acetylation of alpha chains at Lys-40 is located inside the microtubule lumen. This modification has been correlated with increased microtubule stability, intracellular transport and ciliary assembly. In terms of processing, methylation of alpha chains at Lys-40 is found in mitotic microtubules and is required for normal mitosis and cytokinesis contributing to genomic stability. Post-translationally, although this tubulin does not encode a C-terminal tyrosine, a C-terminal tyrosine can be added post-translationally by the tubulin tyrosine ligase (TTL). It can then undergo a detyrosination cycle by the tubulin tyrosine carboxypeptidase (MATCAP1/KIAA0895L).

The protein resides in the cytoplasm. It is found in the cytoskeleton. The catalysed reaction is GTP + H2O = GDP + phosphate + H(+). Functionally, tubulin is the major constituent of microtubules, a cylinder consisting of laterally associated linear protofilaments composed of alpha- and beta-tubulin heterodimers. Microtubules grow by the addition of GTP-tubulin dimers to the microtubule end, where a stabilizing cap forms. Below the cap, tubulin dimers are in GDP-bound state, owing to GTPase activity of alpha-tubulin. In Macaca fascicularis (Crab-eating macaque), this protein is Tubulin alpha-4A chain (TUBA4A).